The primary structure comprises 914 residues: DNA mismatch repair protein MutS (914 aa).

Positions 1–24 (MDNKTDNKNNLTPQSAPSSAPHKE) are disordered. The segment covering 8–18 (KNNLTPQSAPS) has biased composition (polar residues). Residue 662–669 (GPNMGGKS) coordinates ATP.

The protein belongs to the DNA mismatch repair MutS family.

This protein is involved in the repair of mismatches in DNA. It is possible that it carries out the mismatch recognition step. This protein has a weak ATPase activity. The sequence is that of DNA mismatch repair protein MutS from Bartonella henselae (strain ATCC 49882 / DSM 28221 / CCUG 30454 / Houston 1) (Rochalimaea henselae).